The sequence spans 632 residues: Extracellular metalloproteinase 1 (632 aa).

The first 19 residues, 1 to 19, serve as a signal peptide directing secretion; sequence MHGLLLAAGLISLPLHVLA. Positions 20-246 are excised as a propeptide; the sequence is HPQPSSTSLA…VVDYVAHATF (227 aa). N284 carries N-linked (GlcNAc...) asparagine glycosylation. Residue T430 participates in Zn(2+) binding. Residue H431 is part of the active site. S434 is a Zn(2+) binding site. A glycan (N-linked (GlcNAc...) asparagine) is linked at N591.

Belongs to the peptidase M36 family. Requires Zn(2+) as cofactor.

The protein resides in the secreted. Its activity is regulated as follows. PMSF, soybean trypsin inhibitor (SBTI) and chymostatin strongly inhibit the proteinase. Functionally, secreted metalloproteinase probably acting as a virulence factor. The protein is Extracellular metalloproteinase 1 (MEP1) of Arthroderma otae (Microsporum canis).